The following is a 205-amino-acid chain: Cytochrome bo(3) ubiquinol oxidase subunit 3 (205 aa).

Residues 1-26 (MIENKFNNTILNSNSSTHDKISETKK) are Cytoplasmic-facing. A helical transmembrane segment spans residues 27–47 (LFGLWIYLMSDCIMFAVLFAV). Residues 48–69 (YAIVSSNISINLISNKIFNLSS) are Extracellular-facing. Residues 70–90 (ILLETFLLLLSSLSCGFVVIA) traverse the membrane as a helical segment. The Cytoplasmic segment spans residues 91-97 (MNQKRIK). Residues 98–118 (MIYSFLTITFIFGLIFLLMEV) form a helical membrane-spanning segment. Residues 119-138 (HEFYELIIENFGPDKNAFFS) are Extracellular-facing. The helical transmembrane segment at 139–159 (IFFTLVATHGVHIFFGLILIL) threads the bilayer. The Cytoplasmic segment spans residues 160–177 (SILYQIKKLGLTNSIRTR). The chain crosses the membrane as a helical span at residues 178–198 (ILCFSVFWHFLDIIWICVFTF). Topologically, residues 199–205 (VYLNGAI) are extracellular.

This sequence belongs to the cytochrome c oxidase subunit 3 family. As to quaternary structure, heterooctamer of two A chains, two B chains, two C chains and two D chains.

It is found in the cell membrane. Cytochrome bo(3) ubiquinol terminal oxidase is the component of the aerobic respiratory chain of E.coli that predominates when cells are grown at high aeration. Has proton pump activity across the membrane in addition to electron transfer, pumping 2 protons/electron. The protein is Cytochrome bo(3) ubiquinol oxidase subunit 3 (cyoC) of Buchnera aphidicola subsp. Acyrthosiphon pisum (strain APS) (Acyrthosiphon pisum symbiotic bacterium).